Here is a 357-residue protein sequence, read N- to C-terminus: Scopoletin 8-hydroxylase (357 aa).

The Fe2OG dioxygenase domain maps to 206-307 (MGTKMVNMNY…RVSVPIFTAP (102 aa)). Residue tyrosine 216 coordinates 2-oxoglutarate. The Fe cation site is built by histidine 231, aspartate 233, and histidine 288. Residues arginine 298 and serine 300 each coordinate 2-oxoglutarate.

The protein belongs to the iron/ascorbate-dependent oxidoreductase family. The cofactor is L-ascorbate. Requires Fe(2+) as cofactor. As to expression, expressed in both primary and lateral roots under iron-deficient conditions, except in apical root zones, and mostly in the root epidermal layer.

The catalysed reaction is scopoletin + 2-oxoglutarate + O2 = fraxetin + succinate + CO2. The protein operates within phenylpropanoid metabolism. Its function is as follows. Involved in the pathway of sideretin biosynthesis from feruloyl CoA, a redox-active catecholic metabolite exuded by roots in response to iron deficiency in order to facilitate the uptake of iron; this pathway consists in the successive conversion from feruloyl CoA to scopoletin, from scopoletin to fraxetin and from fraxetin to sideretin. Catalyzes the biosynthesis of fraxetin via scopoletin hydroxylation. The chain is Scopoletin 8-hydroxylase from Arabidopsis thaliana (Mouse-ear cress).